Consider the following 369-residue polypeptide: 3-dehydroquinate synthase (369 aa).

Residues 75–80 (DGEEHK), 109–113 (GVIGD), 133–134 (TT), K146, K155, and 173–176 (TLKT) each bind NAD(+). Zn(2+)-binding residues include E188, H251, and H268.

It belongs to the sugar phosphate cyclases superfamily. Dehydroquinate synthase family. The cofactor is Co(2+). Requires Zn(2+) as cofactor. NAD(+) is required as a cofactor.

It is found in the cytoplasm. It catalyses the reaction 7-phospho-2-dehydro-3-deoxy-D-arabino-heptonate = 3-dehydroquinate + phosphate. It participates in metabolic intermediate biosynthesis; chorismate biosynthesis; chorismate from D-erythrose 4-phosphate and phosphoenolpyruvate: step 2/7. In terms of biological role, catalyzes the conversion of 3-deoxy-D-arabino-heptulosonate 7-phosphate (DAHP) to dehydroquinate (DHQ). The polypeptide is 3-dehydroquinate synthase (Legionella pneumophila subsp. pneumophila (strain Philadelphia 1 / ATCC 33152 / DSM 7513)).